The sequence spans 75 residues: Small ribosomal subunit protein bS16 (75 aa).

Belongs to the bacterial ribosomal protein bS16 family.

The polypeptide is Small ribosomal subunit protein bS16 (Nitratiruptor sp. (strain SB155-2)).